The sequence spans 96 residues: Glutamyl-tRNA(Gln) amidotransferase subunit C (96 aa).

It belongs to the GatC family. Heterotrimer of A, B and C subunits.

It carries out the reaction L-glutamyl-tRNA(Gln) + L-glutamine + ATP + H2O = L-glutaminyl-tRNA(Gln) + L-glutamate + ADP + phosphate + H(+). It catalyses the reaction L-aspartyl-tRNA(Asn) + L-glutamine + ATP + H2O = L-asparaginyl-tRNA(Asn) + L-glutamate + ADP + phosphate + 2 H(+). Functionally, allows the formation of correctly charged Asn-tRNA(Asn) or Gln-tRNA(Gln) through the transamidation of misacylated Asp-tRNA(Asn) or Glu-tRNA(Gln) in organisms which lack either or both of asparaginyl-tRNA or glutaminyl-tRNA synthetases. The reaction takes place in the presence of glutamine and ATP through an activated phospho-Asp-tRNA(Asn) or phospho-Glu-tRNA(Gln). This chain is Glutamyl-tRNA(Gln) amidotransferase subunit C, found in Pseudomonas aeruginosa (strain ATCC 15692 / DSM 22644 / CIP 104116 / JCM 14847 / LMG 12228 / 1C / PRS 101 / PAO1).